The sequence spans 173 residues: Regulator of ribonuclease activity A (173 aa).

This sequence belongs to the RraA family. In terms of assembly, homotrimer. Binds to both RNA-binding sites in the C-terminal region of Rne and to RhlB.

The protein localises to the cytoplasm. Globally modulates RNA abundance by binding to RNase E (Rne) and regulating its endonucleolytic activity. Can modulate Rne action in a substrate-dependent manner by altering the composition of the degradosome. Modulates RNA-binding and helicase activities of the degradosome. This is Regulator of ribonuclease activity A from Vibrio vulnificus (strain YJ016).